We begin with the raw amino-acid sequence, 174 residues long: Profilin (174 aa).

The tract at residues 4-9 (YSWENF) is pro-rich sequence-binding. The short motif at 47-53 (FDKWSLF) is the Plasmodium-specific profilin mini-domain element. 2 actin-binding regions span residues 99–111 (KYQFINMDKGLEY) and 151–155 (RGNSK).

This sequence belongs to the profilin family. Binds actin.

It localises to the cytoplasm. It is found in the cytoskeleton. Essential for the invasive blood stages of the parasite. Binds to proline rich sequences in various regulatory formin-like proteins and also to membrane phospholipids. Binds to actin and affects the structure of the cytoskeleton. Weakly sequesters actin monomers. This Plasmodium berghei protein is Profilin.